The following is a 217-amino-acid chain: Peptide methionine sulfoxide reductase MsrA (217 aa).

C56 is an active-site residue.

It belongs to the MsrA Met sulfoxide reductase family.

The enzyme catalyses L-methionyl-[protein] + [thioredoxin]-disulfide + H2O = L-methionyl-(S)-S-oxide-[protein] + [thioredoxin]-dithiol. It carries out the reaction [thioredoxin]-disulfide + L-methionine + H2O = L-methionine (S)-S-oxide + [thioredoxin]-dithiol. In terms of biological role, has an important function as a repair enzyme for proteins that have been inactivated by oxidation. Catalyzes the reversible oxidation-reduction of methionine sulfoxide in proteins to methionine. This chain is Peptide methionine sulfoxide reductase MsrA, found in Corynebacterium melassecola.